Consider the following 449-residue polypeptide: Tubulin alpha-1 chain (449 aa).

The GTP site is built by Gln-11, Glu-71, Ser-140, Gly-144, Thr-145, Thr-179, Asn-206, and Asn-228. Glu-71 provides a ligand contact to Mg(2+). Glu-254 is a catalytic residue.

The protein belongs to the tubulin family. In terms of assembly, dimer of alpha and beta chains. A typical microtubule is a hollow water-filled tube with an outer diameter of 25 nm and an inner diameter of 15 nM. Alpha-beta heterodimers associate head-to-tail to form protofilaments running lengthwise along the microtubule wall with the beta-tubulin subunit facing the microtubule plus end conferring a structural polarity. Microtubules usually have 13 protofilaments but different protofilament numbers can be found in some organisms and specialized cells. Requires Mg(2+) as cofactor.

Its subcellular location is the cytoplasm. The protein resides in the cytoskeleton. The catalysed reaction is GTP + H2O = GDP + phosphate + H(+). Tubulin is the major constituent of microtubules, a cylinder consisting of laterally associated linear protofilaments composed of alpha- and beta-tubulin heterodimers. Microtubules grow by the addition of GTP-tubulin dimers to the microtubule end, where a stabilizing cap forms. Below the cap, tubulin dimers are in GDP-bound state, owing to GTPase activity of alpha-tubulin. The sequence is that of Tubulin alpha-1 chain (tubA) from Emericella nidulans (strain FGSC A4 / ATCC 38163 / CBS 112.46 / NRRL 194 / M139) (Aspergillus nidulans).